The chain runs to 152 residues: Nucleoside diphosphate kinase A (152 aa).

Residues lysine 12, phenylalanine 60, arginine 88, and threonine 94 each contribute to the ATP site. Residue lysine 100 forms a Glycyl lysine isopeptide (Lys-Gly) (interchain with G-Cter in ubiquitin) linkage. ATP contacts are provided by arginine 105 and asparagine 115. Histidine 118 serves as the catalytic Pros-phosphohistidine intermediate. Phosphoserine is present on residues serine 120 and serine 122. Lysine 124 bears the N6-acetyllysine mark. Phosphoserine is present on serine 125.

The protein belongs to the NDK family. Hexamer of two different chains: An and B (A6, A5B, A4B2, A3B3, A2B4, AB5, B6). Interacts with PRUNE1. Component of the SET complex, composed of at least ANP32A, APEX1, HMGB2, NME1, SET and TREX1. Within this complex, interacts directly with SET. Also interacts with TREX1, but only following translocation to the nucleus. Mg(2+) serves as cofactor.

Its subcellular location is the cytoplasm. It is found in the nucleus. It catalyses the reaction a 2'-deoxyribonucleoside 5'-diphosphate + ATP = a 2'-deoxyribonucleoside 5'-triphosphate + ADP. The enzyme catalyses a ribonucleoside 5'-diphosphate + ATP = a ribonucleoside 5'-triphosphate + ADP. Its activity is regulated as follows. Autophosphorylation at His-118 increases serine/threonine protein kinase activity of the enzyme. Interaction with the SET complex inhibits exonuclease activity. In terms of biological role, major role in the synthesis of nucleoside triphosphates other than ATP. The ATP gamma phosphate is transferred to the NDP beta phosphate via a ping-pong mechanism, using a phosphorylated active-site intermediate. Possesses nucleoside-diphosphate kinase, serine/threonine-specific protein kinase, geranyl and farnesyl pyrophosphate kinase, histidine protein kinase and 3'-5' exonuclease activities. Involved in cell proliferation, differentiation and development, signal transduction, G protein-coupled receptor endocytosis, and gene expression. Required for neural development including neural patterning and cell fate determination. During GZMA-mediated cell death, works in concert with TREX1. NME1 nicks one strand of DNA and TREX1 removes bases from the free 3' end to enhance DNA damage and prevent DNA end reannealing and rapid repair. The polypeptide is Nucleoside diphosphate kinase A (Nme1) (Mus musculus (Mouse)).